Here is a 613-residue protein sequence, read N- to C-terminus: Zinc finger CCCH domain-containing protein 59 (613 aa).

A disordered region spans residues 275–296 (NTTLSPYISPAKSVPVEETPKR). 2 consecutive C3H1-type zinc fingers follow at residues 318 to 346 (AGGNRLCFKFTSSGSCPRGSKCNYRHDEE) and 350 to 378 (HYNRNVCFDFLNKGKCEKGPECRFAHSLS).

This Oryza sativa subsp. japonica (Rice) protein is Zinc finger CCCH domain-containing protein 59.